Consider the following 312-residue polypeptide: MKQQYLLDYEATKASKNGMPVCKFDSCIPALQFCKENGIKMRGHVLVWHNQTPEWFFHKDYDVSKPLVDAATMERRLESYIKQVIEFCQKNYPGVVYCWDVVNEAILDDGSWREINNNWYTIMKEKYVEKAFYYARKYAKKDVALFYNDYNVFLPAKREAIYNLAQKLKEKGLIDGLGLQPTVGLNYPELDSDDIDSFKTTLETFAKLGLQIHITELNFEIKGDESNRTPENLKKQADRYYEMMKLLLKEDTDNGGPCNITCVTVFGICDDYPLYKNFKQCMYLWDKNCNPKPCFYSFLQAGLDWKASLLSK.

One can recognise a GH10 domain in the interval 1–301; the sequence is MKQQYLLDYE…KPCFYSFLQA (301 aa). Glutamate 104 functions as the Proton donor in the catalytic mechanism. Glutamate 216 acts as the Nucleophile in catalysis.

The protein belongs to the glycosyl hydrolase 10 (cellulase F) family.

The catalysed reaction is Endohydrolysis of (1-&gt;4)-beta-D-xylosidic linkages in xylans.. It participates in glycan degradation; xylan degradation. Its function is as follows. Could be a xylanase. The chain is Putative endo-1,4-beta-xylanase from Caldicellulosiruptor saccharolyticus (Caldocellum saccharolyticum).